The sequence spans 474 residues: tRNA-2-methylthio-N(6)-dimethylallyladenosine synthase (474 aa).

The MTTase N-terminal domain occupies 3–120 (KKLHIKTWGC…LPEMINSVRG (118 aa)). [4Fe-4S] cluster is bound by residues Cys12, Cys49, Cys83, Cys157, Cys161, and Cys164. A Radical SAM core domain is found at 143-375 (RAEGPTAFVS…QERINQQAMA (233 aa)). The TRAM domain occupies 378-441 (RRMLGSTQRI…PNSLRGKVVR (64 aa)).

The protein belongs to the methylthiotransferase family. MiaB subfamily. Monomer. It depends on [4Fe-4S] cluster as a cofactor.

It localises to the cytoplasm. The catalysed reaction is N(6)-dimethylallyladenosine(37) in tRNA + (sulfur carrier)-SH + AH2 + 2 S-adenosyl-L-methionine = 2-methylsulfanyl-N(6)-dimethylallyladenosine(37) in tRNA + (sulfur carrier)-H + 5'-deoxyadenosine + L-methionine + A + S-adenosyl-L-homocysteine + 2 H(+). Its function is as follows. Catalyzes the methylthiolation of N6-(dimethylallyl)adenosine (i(6)A), leading to the formation of 2-methylthio-N6-(dimethylallyl)adenosine (ms(2)i(6)A) at position 37 in tRNAs that read codons beginning with uridine. The sequence is that of tRNA-2-methylthio-N(6)-dimethylallyladenosine synthase from Salmonella arizonae (strain ATCC BAA-731 / CDC346-86 / RSK2980).